The sequence spans 209 residues: Large ribosomal subunit protein uL3 (209 aa).

Position 150 is an N5-methylglutamine (glutamine 150).

This sequence belongs to the universal ribosomal protein uL3 family. In terms of assembly, part of the 50S ribosomal subunit. Forms a cluster with proteins L14 and L19. Post-translationally, methylated by PrmB.

One of the primary rRNA binding proteins, it binds directly near the 3'-end of the 23S rRNA, where it nucleates assembly of the 50S subunit. This Pasteurella multocida (strain Pm70) protein is Large ribosomal subunit protein uL3.